A 470-amino-acid polypeptide reads, in one-letter code: Dendritic cell-specific transmembrane protein (470 aa).

Over 1–34 (MGIWTSGTDIFLSLWEIYVSPRSPGWMDFIQHLG) the chain is Cytoplasmic. A helical membrane pass occupies residues 35-55 (VCCLVALISVGLLSVAACWFL). Residues 56–57 (PS) are Extracellular-facing. A helical transmembrane segment spans residues 58-78 (IIAAAASWIITCVLLCCSKHA). Residues 79–97 (RCFILLVFLSCGLREGRNA) are Cytoplasmic-facing. A helical membrane pass occupies residues 98–118 (LIAAGTGIVILGHVENIFHNF). At 119–209 (KGLLDGMTCN…MATTTEVLSS (91 aa)) the chain is on the extracellular side. The chain crosses the membrane as a helical span at residues 210 to 230 (LGQKLLAFAGLSLVLLGTGLF). Residues 231-292 (MKRFLGPCGW…FWPTPKERKN (62 aa)) are Cytoplasmic-facing. The chain crosses the membrane as a helical span at residues 293–313 (LGLFFLPILIHLCIWVLFAAV). Residues 314 to 376 (DYLLYRLIFS…PKPKFLLSET (63 aa)) are Extracellular-facing. The chain crosses the membrane as a helical span at residues 377–397 (WVPLSVILLILVMLGLLSSIL). Residues 398-470 (MQLKILVSAS…QMDMASADKS (73 aa)) lie on the Cytoplasmic side of the membrane.

Monomer. Homodimer. Isoform 1 interacts (via the C-terminus cytoplasmic tail) with OS9 isoform 1 (via the C-terminus tail); the interaction induces DCSTAMP redistribution to the endoplasmic reticulum-Golgi intermediate compartment. Isoform 1 interacts (via the C-terminus cytoplasmic tail) with OS9 isoform 2 (via the C-terminus tail). Interacts with CREB3. Glycosylated. In terms of tissue distribution, preferentially expressed by dendritic cells (DCs). Detected in both immature and mature DCs. Highly expressed in lymph nodes, lung, kidney and liver. Expressed at lower levels in pancreas, bone marrow, spleen, leukocytes, in freshly isolated peripheral blood mononuclear cells (PBMC) and B-cells. Not expressed in freshly isolated monocytes.

It is found in the cell membrane. The protein localises to the endoplasmic reticulum membrane. It localises to the endoplasmic reticulum-Golgi intermediate compartment membrane. Its subcellular location is the endosome. Probable cell surface receptor that plays several roles in cellular fusion, cell differentiation, bone and immune homeostasis. Plays a role in TNFSF11-mediated osteoclastogenesis. Cooperates with OCSTAMP in modulating cell-cell fusion in both osteoclasts and foreign body giant cells (FBGCs). Participates in osteoclast bone resorption. Involved in inducing the expression of tartrate-resistant acid phosphatase in osteoclast precursors. Plays a role in haematopoietic stem cell differentiation of bone marrow cells toward the myeloid lineage. Inhibits the development of neutrophilic granulocytes. Plays also a role in the regulation of dendritic cell (DC) antigen presentation activity by controlling phagocytic activity. Involved in the maintenance of immune self-tolerance and avoidance of autoimmune reactions. The protein is Dendritic cell-specific transmembrane protein (DCSTAMP) of Homo sapiens (Human).